A 158-amino-acid polypeptide reads, in one-letter code: Putative peptidoglycan-binding-like protein (158 aa).

Positions Met-1–Ala-24 are cleaved as a signal peptide.

The protein belongs to the IagB/IpgF/P19 family.

Its subcellular location is the periplasm. This is Putative peptidoglycan-binding-like protein (pbl) from Escherichia coli (strain K12).